We begin with the raw amino-acid sequence, 609 residues long: 1-deoxy-D-xylulose-5-phosphate synthase (609 aa).

Thiamine diphosphate contacts are provided by residues histidine 77 and 118-120 (GHS). Aspartate 149 is a binding site for Mg(2+). Residues 150 to 151 (GA), asparagine 178, tyrosine 259, and glutamate 342 each bind thiamine diphosphate. Asparagine 178 serves as a coordination point for Mg(2+).

Belongs to the transketolase family. DXPS subfamily. As to quaternary structure, homodimer. The cofactor is Mg(2+). Thiamine diphosphate serves as cofactor.

The catalysed reaction is D-glyceraldehyde 3-phosphate + pyruvate + H(+) = 1-deoxy-D-xylulose 5-phosphate + CO2. Its pathway is metabolic intermediate biosynthesis; 1-deoxy-D-xylulose 5-phosphate biosynthesis; 1-deoxy-D-xylulose 5-phosphate from D-glyceraldehyde 3-phosphate and pyruvate: step 1/1. Functionally, catalyzes the acyloin condensation reaction between C atoms 2 and 3 of pyruvate and glyceraldehyde 3-phosphate to yield 1-deoxy-D-xylulose-5-phosphate (DXP). In Listeria monocytogenes serotype 4b (strain CLIP80459), this protein is 1-deoxy-D-xylulose-5-phosphate synthase.